Consider the following 92-residue polypeptide: Probable Fe(2+)-trafficking protein (92 aa).

Belongs to the Fe(2+)-trafficking protein family.

In terms of biological role, could be a mediator in iron transactions between iron acquisition and iron-requiring processes, such as synthesis and/or repair of Fe-S clusters in biosynthetic enzymes. In Shewanella piezotolerans (strain WP3 / JCM 13877), this protein is Probable Fe(2+)-trafficking protein.